We begin with the raw amino-acid sequence, 295 residues long: Alpha-ketoglutarate-dependent dioxygenase alkB homolog 3 (295 aa).

Residues 1-48 (MGDKRQRARVQGAWATPTKSQSAARPATPARSRPSQTPGPSWRSKEQQ) form a disordered region. Low complexity predominate over residues 22-35 (SAARPATPARSRPS). Substrate is bound by residues Trp-115 and 141-143 (YTY). Positions 172 to 278 (TFNSLLCNFY…RVNLTFRTVY (107 aa)) constitute a Fe2OG dioxygenase domain. Position 177 is a (4R)-5-hydroxyleucine; alternate (Leu-177). Leu-177 carries the (4R)-5-oxoleucine; alternate modification. 179 to 181 (NFY) provides a ligand contact to 2-oxoglutarate. Positions 191 and 193 each coordinate Fe cation. Asp-194 is a substrate binding site. His-257 provides a ligand contact to Fe cation. 2-oxoglutarate is bound by residues 269–275 (RVNLTFR) and Arg-275.

It belongs to the alkB family. Interacts with the ASCC complex composed of ASCC1, ASCC2 and ASCC3. Interacts directly with ASCC3, and is thereby recruited to the ASCC complex. Interacts with OTUD4; the interaction is direct. Interacts with USP7 and USP9X. The cofactor is Fe(2+). Post-translationally, ubiquitinated; undergoes 'Lys-48'-linked polyubiquitination. OTUD4 promotes USP7 and USP9X-dependent deubiquitination of 'Lys-48'-polyubiquitinated ALKBH3 promoting the repair of alkylated DNA lesions.

It localises to the nucleus. The protein resides in the cytoplasm. The catalysed reaction is an N(1)-methyladenosine in mRNA + 2-oxoglutarate + O2 = an adenosine in mRNA + formaldehyde + succinate + CO2. It catalyses the reaction a methylated nucleobase within DNA + 2-oxoglutarate + O2 = a nucleobase within DNA + formaldehyde + succinate + CO2. The enzyme catalyses an N(1)-methyl-2'-deoxyadenosine in single-stranded DNA + 2-oxoglutarate + O2 = a 2'-deoxyadenosine in single-stranded DNA + formaldehyde + succinate + CO2 + H(+). It carries out the reaction an N(3)-methyl-2'-deoxycytidine in single-stranded DNA + 2-oxoglutarate + O2 = a 2'-deoxycytidine in single-stranded DNA + formaldehyde + succinate + CO2 + H(+). The catalysed reaction is a 3,N(4)-etheno-2'-deoxycytidine in single-stranded DNA + 2-oxoglutarate + O2 + H2O = a 2'-deoxycytidine in single-stranded DNA + glyoxal + succinate + CO2. Its activity is regulated as follows. Activated by ascorbate. Functionally, dioxygenase that mediates demethylation of DNA and RNA containing 1-methyladenosine (m1A). Repairs alkylated DNA containing 1-methyladenosine (m1A) and 3-methylcytosine (m3C) by oxidative demethylation. Has a strong preference for single-stranded DNA. Able to process alkylated m3C within double-stranded regions via its interaction with ASCC3, which promotes DNA unwinding to generate single-stranded substrate needed for ALKBH3. Can repair exocyclic 3,N4-ethenocytosine adducs in single-stranded DNA. Also acts on RNA. Demethylates N(1)-methyladenosine (m1A) RNA, an epigenetic internal modification of messenger RNAs (mRNAs) highly enriched within 5'-untranslated regions (UTRs) and in the vicinity of start codons. Requires molecular oxygen, alpha-ketoglutarate and iron. The sequence is that of Alpha-ketoglutarate-dependent dioxygenase alkB homolog 3 from Rattus norvegicus (Rat).